We begin with the raw amino-acid sequence, 1390 residues long: DNA-directed RNA polymerase subunit beta'' (1390 aa).

Residues C220, C291, C298, and C301 each coordinate Zn(2+).

It belongs to the RNA polymerase beta' chain family. RpoC2 subfamily. In plastids the minimal PEP RNA polymerase catalytic core is composed of four subunits: alpha, beta, beta', and beta''. When a (nuclear-encoded) sigma factor is associated with the core the holoenzyme is formed, which can initiate transcription. Zn(2+) serves as cofactor.

Its subcellular location is the plastid. It localises to the chloroplast. The catalysed reaction is RNA(n) + a ribonucleoside 5'-triphosphate = RNA(n+1) + diphosphate. In terms of biological role, DNA-dependent RNA polymerase catalyzes the transcription of DNA into RNA using the four ribonucleoside triphosphates as substrates. The polypeptide is DNA-directed RNA polymerase subunit beta'' (Populus alba (White poplar)).